Reading from the N-terminus, the 67-residue chain is Putative sheath terminator protein (67 aa).

The segment at 45 to 67 (EVGSTENTADDTDAAPKKRSKSK) is disordered.

It localises to the virion. Its subcellular location is the host cytoplasm. In terms of biological role, may possibly stop tail sheath polymerization by capping the polymerizing tail sheath once it has reached its requisite length and prevent its depolymerization. Probably interacts with both the tube and sheath proteins. In Escherichia phage Mu (Bacteriophage Mu), this protein is Putative sheath terminator protein.